The following is a 103-amino-acid chain: Small ribosomal subunit protein uS14c (103 aa).

The protein belongs to the universal ribosomal protein uS14 family. As to quaternary structure, part of the 30S ribosomal subunit.

Its subcellular location is the plastid. It localises to the chloroplast. Its function is as follows. Binds 16S rRNA, required for the assembly of 30S particles. The polypeptide is Small ribosomal subunit protein uS14c (Lolium perenne (Perennial ryegrass)).